The primary structure comprises 328 residues: Ferredoxin--NADP reductase 1 (328 aa).

FAD-binding residues include D28, Q36, Y41, A81, I116, D277, and S320.

The protein belongs to the ferredoxin--NADP reductase type 2 family. Homodimer. The cofactor is FAD.

It carries out the reaction 2 reduced [2Fe-2S]-[ferredoxin] + NADP(+) + H(+) = 2 oxidized [2Fe-2S]-[ferredoxin] + NADPH. In Sulfolobus acidocaldarius (strain ATCC 33909 / DSM 639 / JCM 8929 / NBRC 15157 / NCIMB 11770), this protein is Ferredoxin--NADP reductase 1.